Here is a 502-residue protein sequence, read N- to C-terminus: Glycerol kinase (502 aa).

Thr-14 provides a ligand contact to ADP. 3 residues coordinate ATP: Thr-14, Thr-15, and Ser-16. Thr-14 serves as a coordination point for sn-glycerol 3-phosphate. Residue Arg-18 participates in ADP binding. Arg-84, Glu-85, Tyr-136, and Asp-246 together coordinate sn-glycerol 3-phosphate. Glycerol-binding residues include Arg-84, Glu-85, Tyr-136, Asp-246, and Gln-247. ADP is bound by residues Thr-268 and Gly-311. Thr-268, Gly-311, Gln-315, and Gly-412 together coordinate ATP. ADP is bound by residues Gly-412 and Asn-416.

Belongs to the FGGY kinase family. As to quaternary structure, homotetramer and homodimer (in equilibrium). Heterodimer with EIIA-Glc. Binds 1 zinc ion per glycerol kinase EIIA-Glc dimer. The zinc ion is important for dimerization.

It carries out the reaction glycerol + ATP = sn-glycerol 3-phosphate + ADP + H(+). The protein operates within polyol metabolism; glycerol degradation via glycerol kinase pathway; sn-glycerol 3-phosphate from glycerol: step 1/1. With respect to regulation, activity of this regulatory enzyme is affected by several metabolites. Allosterically and non-competitively inhibited by fructose 1,6-bisphosphate (FBP) and unphosphorylated phosphocarrier protein EIIA-Glc (III-Glc), an integral component of the bacterial phosphotransferase (PTS) system. In terms of biological role, key enzyme in the regulation of glycerol uptake and metabolism. Catalyzes the phosphorylation of glycerol to yield sn-glycerol 3-phosphate. This is Glycerol kinase from Shigella dysenteriae serotype 1 (strain Sd197).